The chain runs to 290 residues: MISGYTALYGLIAHPAQHSLSPFIHNTGFHQIQMDARYAVFDSQATPAAITSAIKTLGIRGVNLSMPYKQSLVPLVDNLTSTAKLVGAINTIKNEAGRLTATNTDGDGFWCALQKAHPQRRYRSVTILGAGGAALAVIEAAVRYGVQQVTVFKRANATYDSVIQRLAQISLASGLQIIVEPYDDQLALATALQNADCLINATNIGMTATPGNPLPINLLQYLPEDSLVADLIYAPRETAFLKTAQKAHYQIQNGLGMLIEQAALSFEFWTNESMATMPIYQHLTGGNDAS.

Residues 19–21 (SLS) and S65 each bind shikimate. Residue K69 is the Proton acceptor of the active site. 2 residues coordinate shikimate: N90 and D105. NADP(+) is bound by residues 129–133 (GAGGA) and L231. Y233 lines the shikimate pocket. An NADP(+)-binding site is contributed by G254.

This sequence belongs to the shikimate dehydrogenase family. Homodimer.

The enzyme catalyses shikimate + NADP(+) = 3-dehydroshikimate + NADPH + H(+). Its pathway is metabolic intermediate biosynthesis; chorismate biosynthesis; chorismate from D-erythrose 4-phosphate and phosphoenolpyruvate: step 4/7. In terms of biological role, involved in the biosynthesis of the chorismate, which leads to the biosynthesis of aromatic amino acids. Catalyzes the reversible NADPH linked reduction of 3-dehydroshikimate (DHSA) to yield shikimate (SA). The chain is Shikimate dehydrogenase (NADP(+)) from Latilactobacillus sakei subsp. sakei (strain 23K) (Lactobacillus sakei subsp. sakei).